The following is a 1890-amino-acid chain: MSRAESSWERLVNAALRRDRTGGVAGGNQSSIVGYVPSSLSNNRDIDAILRAADEIQDEDPNIARILCEHGYSLAQNLDPNSEGRGVLQFKTGLMSVIKQKLAKREVGTIDRSQDILRLQEFYRLYREKNNVDTLKEEEKQLRESGAFTDELERKTVKRKRVFATLKVLGSVLEQLAKEIPEELKHVIDSDAAMSEDTIAYNIIPLDAPVTTNATTTFPEVQAAVAALKYFPGLPKLPPDFPIPATRTADMLDFLHYIFGFQKDSVSNQREHIVLLLANEQSRLNIPEETEPKLDDAAVRKVFLKSLENYIKWCDYLCIQPAWSNLEAINGDKKLLFLSLYFLIWGEAANIRFLPECLCYIFHHMVREMDEILRQQVARPAESCMPVDSRGSDDGVSFLDHVIAPLYGVVSAEAFNNDNGRAPHSAWRNYDDFNEYFWSLHSFELGWPWRTSSSFFQKPIPRKKLKTGRAKHRGKTSFVEHRTFLHLYHSFHRLWIFLAMMFQALAIIAFNKDDLTSRKTLLQILSLGPTFVVMKFSESVLEVIMMYGAYSTTRRLAVSRIFLRFIWFGLASVFISFLYVKSLKAPNSDSPIVQLYLIVIAIYGGVQFFFSILMRIPTCHNIANKCDRWPVIRFFKWMRQERHYVGRGMYERTSDFIKYLLFWLVVLSAKFSFAYFLQIKPLVGPTRMIVKQNNIPYSWHDFVSRKNYNALTVASLWAPVVAIYLLDIHIFYTIFSAFLGFLLGARDRLGEIRSLEAIHKLFEEFPGAFMRALHVPLTNRTSDTSHQTVDKKNKVDAAHFAPFWNQIIKSLREEDYITDFEMELLLMPKNSGRLELVQWPLFLLSSKILLAKEIAAESNSQEEILERIERDDYMKYAVEEVYHTLKLVLTETLEAEGRLWVERIYEDIQTSLKERNIHHDFQLNKLSLVITRVTALLGILKENETPEHAKGAIKALQDLYDVMRLDILTFNMRGHYETWNLLTQAWNEGRLFTKLKWPKDPELKALVKRLYSLFTIKDSAAHVPRNLEARRRLQFFTNSLFMDVPPPKSVRKMLSFSVFTPYYSEVVLYSMAELTKRNEDGISILFYLQKIYPDEWKNFLARIGRDENALEGDLDNERDILELRFWASYRGQTLARTVRGMMYYRKALMLQSYLERKAGNDATDAEGFELSPEARAQADLKFTYVVTCQIYGRQKEDQKPEAVDIALLMQRNEALRIAYIDVVDSPKEGKSHTEYYSKLVKADISGKDKEIYSIKLPGDPKLGEGKPENQNHAIVFTRGNAIQTIDMNQDNYFEEALKMRNLLEEFDRDHGIRPPTILGVREHVFTGSVSSLASFMSNQETSFVTLGQRVLAKPLKIRMHYGHPDVFDRVFHITRGGISKASRVINISEDIFAGFNTTLRQGNVTHHEYIQVGKGRDVGLNQIALFEGKVAGGNGEQVLSRDVYRLGQLLDFFRMMSFFFTTVGFYLCTMLTVLTVYIFLYGRAYLALSGVGATIRERAILLDDTALSAALNAQFLFQIGVFTAVPMVLGFILEQGFLQAIVSFITMQFQLCTVFFTFSLGTRTHYFGRTILHGGARYQATGRGFVVKHIKFSENYRLYSRSHFVKAMEVILLLVVYLAYGNDEAGAVSYILLTVSSWFLAVSWLFAPYLFNPAGFEWQKVVEDFKEWTNWLFYRGGIGVKGAESWEAWWEEELSHIRTLSGRIMETILSLRFFIFQYGIVYKLKLQGSDTSFAVYGWSWVAFAMIIVLFKVFTFSQKISVNFQLLLRFIQGLSLLMALAGIIVAVVLTPLSVTDIFACVLAFIPTGWGILSIACAWKPVLKRMGMWKSIRSLARLYDALMGMLIFLPVALCSWFPFVSTFQTRMMFNQAFSRGLEISLILAGDNPNSGL.

Residues 1-489 (MSRAESSWER…EHRTFLHLYH (489 aa)) lie on the Cytoplasmic side of the membrane. The chain crosses the membrane as a helical span at residues 490–510 (SFHRLWIFLAMMFQALAIIAF). Residues 511–523 (NKDDLTSRKTLLQ) lie on the Extracellular side of the membrane. The chain crosses the membrane as a helical span at residues 524 to 544 (ILSLGPTFVVMKFSESVLEVI). Residues 545–560 (MMYGAYSTTRRLAVSR) lie on the Cytoplasmic side of the membrane. Residues 561 to 581 (IFLRFIWFGLASVFISFLYVK) traverse the membrane as a helical segment. Residues 582 to 591 (SLKAPNSDSP) lie on the Extracellular side of the membrane. The chain crosses the membrane as a helical span at residues 592 to 612 (IVQLYLIVIAIYGGVQFFFSI). Residues 613–658 (LMRIPTCHNIANKCDRWPVIRFFKWMRQERHYVGRGMYERTSDFIK) are Cytoplasmic-facing. A helical membrane pass occupies residues 659 to 679 (YLLFWLVVLSAKFSFAYFLQI). Over 680–722 (KPLVGPTRMIVKQNNIPYSWHDFVSRKNYNALTVASLWAPVVA) the chain is Extracellular. Residues 723–743 (IYLLDIHIFYTIFSAFLGFLL) form a helical membrane-spanning segment. The Cytoplasmic portion of the chain corresponds to 744–1457 (GARDRLGEIR…QLLDFFRMMS (714 aa)). The chain crosses the membrane as a helical span at residues 1458–1478 (FFFTTVGFYLCTMLTVLTVYI). At 1479 to 1512 (FLYGRAYLALSGVGATIRERAILLDDTALSAALN) the chain is on the extracellular side. Residues 1513–1533 (AQFLFQIGVFTAVPMVLGFIL) traverse the membrane as a helical segment. The Cytoplasmic portion of the chain corresponds to 1534–1539 (EQGFLQ). Residues 1540 to 1560 (AIVSFITMQFQLCTVFFTFSL) form a helical membrane-spanning segment. Topologically, residues 1561–1609 (GTRTHYFGRTILHGGARYQATGRGFVVKHIKFSENYRLYSRSHFVKAME) are extracellular. A run of 2 helical transmembrane segments spans residues 1610 to 1630 (VILL…AVSY) and 1631 to 1651 (ILLT…PYLF). The Extracellular portion of the chain corresponds to 1652-1703 (NPAGFEWQKVVEDFKEWTNWLFYRGGIGVKGAESWEAWWEEELSHIRTLSGR). A helical membrane pass occupies residues 1704-1724 (IMETILSLRFFIFQYGIVYKL). The Cytoplasmic portion of the chain corresponds to 1725–1732 (KLQGSDTS). The helical transmembrane segment at 1733–1753 (FAVYGWSWVAFAMIIVLFKVF) threads the bilayer. The Extracellular segment spans residues 1754 to 1768 (TFSQKISVNFQLLLR). The helical transmembrane segment at 1769 to 1789 (FIQGLSLLMALAGIIVAVVLT) threads the bilayer. Over 1790 to 1795 (PLSVTD) the chain is Cytoplasmic. A helical transmembrane segment spans residues 1796-1816 (IFACVLAFIPTGWGILSIACA). Topologically, residues 1817–1838 (WKPVLKRMGMWKSIRSLARLYD) are extracellular. Residues 1839-1859 (ALMGMLIFLPVALCSWFPFVS) form a helical membrane-spanning segment. Residues 1860–1890 (TFQTRMMFNQAFSRGLEISLILAGDNPNSGL) are Cytoplasmic-facing.

It belongs to the glycosyltransferase 48 family.

The protein resides in the cell membrane. It carries out the reaction [(1-&gt;3)-beta-D-glucosyl](n) + UDP-alpha-D-glucose = [(1-&gt;3)-beta-D-glucosyl](n+1) + UDP + H(+). Its function is as follows. Involved in sporophytic and gametophytic development. Required for normal plant development. During pollen formation, required for the entry of microspores into mitosis and microspore symmetric division. May be required for correct temporal and spatial control of callose deposition during pollen mitosis. During plant growth and development, callose is found as a transitory component of the cell plate in dividing cells, is a major component of pollen mother cell walls and pollen tubes, and is found as a structural component of plasmodesmatal canals. The chain is Callose synthase 9 (CALS9) from Arabidopsis thaliana (Mouse-ear cress).